The sequence spans 209 residues: A-type ATP synthase subunit D (209 aa).

Belongs to the V-ATPase D subunit family. As to quaternary structure, has multiple subunits with at least A(3), B(3), C, D, E, F, H, I and proteolipid K(x).

It localises to the cell membrane. Component of the A-type ATP synthase that produces ATP from ADP in the presence of a proton gradient across the membrane. The sequence is that of A-type ATP synthase subunit D from Thermoplasma volcanium (strain ATCC 51530 / DSM 4299 / JCM 9571 / NBRC 15438 / GSS1).